We begin with the raw amino-acid sequence, 237 residues long: Uracil-DNA glycosylase (237 aa).

The Proton acceptor role is filled by aspartate 77.

Belongs to the uracil-DNA glycosylase (UDG) superfamily. UNG family.

Its subcellular location is the cytoplasm. The enzyme catalyses Hydrolyzes single-stranded DNA or mismatched double-stranded DNA and polynucleotides, releasing free uracil.. Functionally, excises uracil residues from the DNA which can arise as a result of misincorporation of dUMP residues by DNA polymerase or due to deamination of cytosine. The chain is Uracil-DNA glycosylase from Acinetobacter baumannii (strain SDF).